Here is a 186-residue protein sequence, read N- to C-terminus: MASEDPSVSGVSGRYATALFELARDEKVVDAVTADLDKFKAMLADSPDLLRLVRSPVFGAEAQAKALGAVLDKAGITGISANFLKLLAANRRLFVVADVIRAYRALVAKFKGEATADVTVAETLGDKNLEALKAALKAVTGKDVTLNINVDPAIIGGLVVKLGSRMVDSSIRTKLNSIKHAMKEAG.

It belongs to the ATPase delta chain family. In terms of assembly, F-type ATPases have 2 components, F(1) - the catalytic core - and F(0) - the membrane proton channel. F(1) has five subunits: alpha(3), beta(3), gamma(1), delta(1), epsilon(1). CF(0) has four main subunits: a(1), b(1), b'(1) and c(10-14). The alpha and beta chains form an alternating ring which encloses part of the gamma chain. F(1) is attached to F(0) by a central stalk formed by the gamma and epsilon chains, while a peripheral stalk is formed by the delta, b and b' chains.

The protein localises to the cell inner membrane. F(1)F(0) ATP synthase produces ATP from ADP in the presence of a proton or sodium gradient. F-type ATPases consist of two structural domains, F(1) containing the extramembraneous catalytic core and F(0) containing the membrane proton channel, linked together by a central stalk and a peripheral stalk. During catalysis, ATP synthesis in the catalytic domain of F(1) is coupled via a rotary mechanism of the central stalk subunits to proton translocation. In terms of biological role, this protein is part of the stalk that links CF(0) to CF(1). It either transmits conformational changes from CF(0) to CF(1) or is implicated in proton conduction. The polypeptide is ATP synthase subunit delta (Rhodopseudomonas palustris (strain HaA2)).